Consider the following 61-residue polypeptide: Photosystem II reaction center protein K (61 aa).

Positions 1–24 are excised as a propeptide; sequence MLNILSFIGICLNSFLYSSSFFVA. Residues 40–60 traverse the membrane as a helical segment; sequence MPVIPLFFFLLAFVWQAAVSF.

Belongs to the PsbK family. As to quaternary structure, PSII is composed of 1 copy each of membrane proteins PsbA, PsbB, PsbC, PsbD, PsbE, PsbF, PsbH, PsbI, PsbJ, PsbK, PsbL, PsbM, PsbT, PsbX, PsbY, PsbZ, Psb30/Ycf12, at least 3 peripheral proteins of the oxygen-evolving complex and a large number of cofactors. It forms dimeric complexes.

It is found in the plastid. It localises to the chloroplast thylakoid membrane. One of the components of the core complex of photosystem II (PSII). PSII is a light-driven water:plastoquinone oxidoreductase that uses light energy to abstract electrons from H(2)O, generating O(2) and a proton gradient subsequently used for ATP formation. It consists of a core antenna complex that captures photons, and an electron transfer chain that converts photonic excitation into a charge separation. This is Photosystem II reaction center protein K from Cucumis sativus (Cucumber).